The chain runs to 282 residues: Transcription factor BC1 (282 aa).

The segment at 34–123 is disordered; it reads TTAPAIPEDA…ATDSHSLAER (90 aa). Polar residues predominate over residues 45 to 55; that stretch reads METSSVVLDTS. Basic and acidic residues predominate over residues 75 to 84; that stretch reads HSKEAKENGR. A Nuclear localization signal motif is present at residues 109 to 116; that stretch reads ARRGQATD. The tract at residues 113 to 126 is basic motif; degenerate; that stretch reads QATDSHSLAERVRR. Positions 113 to 163 constitute a bHLH domain; sequence QATDSHSLAERVRRERISERMRMLQALVPGCDKVTGKALILDEIINYVQSL. A helix-loop-helix motif region spans residues 127–163; the sequence is ERISERMRMLQALVPGCDKVTGKALILDEIINYVQSL. The tract at residues 219–251 is disordered; it reads PAQSHAIMDTSNTSPTPYTLQVQGGSNNNSLSQ.

It belongs to the bHLH protein family. As to quaternary structure, homodimer. Component of a nuclear cell elongation controlling complex made of ILI5/BUL1, LO9-177 and BC1. Interacts with ILI5/BUL1 only in the presence of LO9-177. Interacts with IBH1. Binds to LO9-177 in the nucleus. Interacts with BCL1. Preferentially present in anthers and leaves lamina joints. Expressed in seedlings, leaves sheaths, collars and panicles.

The protein localises to the nucleus. Its function is as follows. Transcription activator that contributes, together with LO9-177 and ILI5/BUL1, to the promotion of leaf inclination and grain size by modulating cell elongation. Involved in the RLI1-dependent modulation of leaf inclination by promoting lamina joint cell elongation, especially in response to phosphate (Pi) availability. The protein is Transcription factor BC1 of Oryza sativa subsp. japonica (Rice).